The following is a 200-amino-acid chain: DNA-binding protein HupB (200 aa).

A bacterial histone-like domain region spans residues 1-90; that stretch reads MNKAELIDVL…PGAQFKAVVA (90 aa). N6-acetyllysine occurs at positions 3, 72, 86, 103, 137, 144, and 156. Residues 101–200 form a degenerate repeats region region; sequence AVKRGVATSA…KVTAAKRGRK (100 aa). Residues 179 to 200 form a disordered region; it reads AKKAAVKKAPAKKVTAAKRGRK.

This sequence belongs to the bacterial histone-like protein family. Long actinobacterial subfamily. As to quaternary structure, binds to human laminin-2. In terms of processing, may also be methylated and possibly phosphorylated in vivo.

The protein resides in the cytoplasm. It localises to the nucleoid. Its subcellular location is the secreted. The protein localises to the cell wall. It is found in the cell surface. It carries out the reaction 4 Fe(2+) + O2 + 4 H(+) = 4 Fe(3+) + 2 H2O. A nucleoid-associated protein (NAP) that plays a role in local chromosome architecture and chromosome compactation. Required for biofilm formation, stress survival and possibly in cell wall assembly, probably influences transcription. RNase E and HupB jointly contribute to cellular adaptation to changing growth conditions and survival during antibiotic treatment and in the host. In terms of biological role, binds Fe(3+) but not Fe(2+). Has ferroxidase activity, converts Fe(2+) into Fe(3+) and in the presence of H(2)O(2) prevents the generation of hydroxyl radicals (the Fenton reaction). Protects DNA from damage in the presence of FeSO(4) and H(2)O(2). May function in iron storage. Functionally, may be involved in entry into human Schwann cells. The protein is DNA-binding protein HupB of Mycobacterium leprae (strain TN).